Reading from the N-terminus, the 154-residue chain is Myoglobin (154 aa).

Residues 2–148 enclose the Globin domain; that stretch reads GLSDEEWKKV…FRNDMASRYK (147 aa). Residue His65 participates in nitrite binding. His65 contacts O2. His94 serves as a coordination point for heme b.

Belongs to the globin family. As to quaternary structure, monomeric.

The protein resides in the cytoplasm. The protein localises to the sarcoplasm. It carries out the reaction Fe(III)-heme b-[protein] + nitric oxide + H2O = Fe(II)-heme b-[protein] + nitrite + 2 H(+). The catalysed reaction is H2O2 + AH2 = A + 2 H2O. Monomeric heme protein which primary function is to store oxygen and facilitate its diffusion within muscle tissues. Reversibly binds oxygen through a pentacoordinated heme iron and enables its timely and efficient release as needed during periods of heightened demand. Depending on the oxidative conditions of tissues and cells, and in addition to its ability to bind oxygen, it also has a nitrite reductase activity whereby it regulates the production of bioactive nitric oxide. Under stress conditions, like hypoxia and anoxia, it also protects cells against reactive oxygen species thanks to its pseudoperoxidase activity. This chain is Myoglobin (MB), found in Varanus varius (Lace monitor lizard).